Reading from the N-terminus, the 900-residue chain is Alanine--tRNA ligase (900 aa).

His-604, His-608, Cys-708, and His-712 together coordinate Zn(2+).

It belongs to the class-II aminoacyl-tRNA synthetase family. Zn(2+) is required as a cofactor.

It is found in the cytoplasm. It carries out the reaction tRNA(Ala) + L-alanine + ATP = L-alanyl-tRNA(Ala) + AMP + diphosphate. Its function is as follows. Catalyzes the attachment of alanine to tRNA(Ala) in a two-step reaction: alanine is first activated by ATP to form Ala-AMP and then transferred to the acceptor end of tRNA(Ala). Also edits incorrectly charged Ser-tRNA(Ala) and Gly-tRNA(Ala) via its editing domain. In Saccharolobus islandicus (strain M.16.27) (Sulfolobus islandicus), this protein is Alanine--tRNA ligase.